Reading from the N-terminus, the 169-residue chain is Large ribosomal subunit protein uL10 (169 aa).

Belongs to the universal ribosomal protein uL10 family. As to quaternary structure, part of the ribosomal stalk of the 50S ribosomal subunit. The N-terminus interacts with L11 and the large rRNA to form the base of the stalk. The C-terminus forms an elongated spine to which L12 dimers bind in a sequential fashion forming a multimeric L10(L12)X complex.

Its function is as follows. Forms part of the ribosomal stalk, playing a central role in the interaction of the ribosome with GTP-bound translation factors. In Rickettsia akari (strain Hartford), this protein is Large ribosomal subunit protein uL10.